We begin with the raw amino-acid sequence, 499 residues long: Lysine--tRNA ligase (499 aa).

Positions 408 and 415 each coordinate Mg(2+).

Belongs to the class-II aminoacyl-tRNA synthetase family. Homodimer. Mg(2+) is required as a cofactor.

It localises to the cytoplasm. It carries out the reaction tRNA(Lys) + L-lysine + ATP = L-lysyl-tRNA(Lys) + AMP + diphosphate. In Bacillus cereus (strain G9842), this protein is Lysine--tRNA ligase.